Consider the following 430-residue polypeptide: MEF2-activating motif and SAP domain-containing transcriptional regulator (430 aa).

The MEF2-binding motif lies at 12–28 (IIRSKFRSVLQLRIHRR). Disordered stretches follow at residues 84 to 172 (CWSL…PLPH), 204 to 239 (KSML…RFRP), 280 to 301 (VATT…APAS), and 330 to 416 (EDQV…DLSD). A compositionally biased stretch (basic and acidic residues) spans 87-103 (LKKESPKTSQHWREPKP). Residues 147 to 170 (QPPPRMKPTPLTPSPPGVPSPSPL) are compositionally biased toward pro residues. The SAP domain occupies 181 to 215 (LEELTVSELRQQLRLRGLPVSGTKSMLLERMRGGA). Over residues 207 to 228 (LLERMRGGAPPRERPKARREDS) the composition is skewed to basic and acidic residues. The segment at 224-430 (RREDSAAGAP…RLWDLLEDPW (207 aa)) is transcription activation. Composition is skewed to low complexity over residues 363–373 (SSVFSSSLPSP) and 393–403 (ALSGGPSLGCG).

Interacts with MEF2C.

It is found in the nucleus. Its function is as follows. Transcriptional coactivator. Stimulates the transcriptional activity of MEF2C. Stimulates MYOD1 activity in part via MEF2, resulting in an enhancement of skeletal muscle differentiation. The protein is MEF2-activating motif and SAP domain-containing transcriptional regulator (MAMSTR) of Bos taurus (Bovine).